The primary structure comprises 680 residues: MTQFTDIDKLAVSTIRILAVDTVSKANSGHPGAPLGMAPAAHVLWSQMRMNPTNPDWINRDRFVLSNGHAVALLYSMLHLTGYDLSIEDLKQFRQLGSRTPGHPEFELPGVEVTTGPLGQGISNAVGMAMAQANLAATYNKPGFTLSDNYTYVFLGDGCLQEGISSEASSLAGHLKLGNLIAIYDDNKITIDGATSISFDEDVAKRYEAYGWEVLYVENGNEDLAGIAKAIAQAKLSKDKPTLIKMTTTIGYGSLHAGSHSVHGAPLKADDVKQLKSKFGFNPDKSFVVPQEVYDHYQKTILKPGVEANNKWNKLFSEYQKKFPELGAELARRLSGQLPANWESKLPTYTAKDSAVATRKLSETVLEDVYNQLPELIGGSADLTPSNLTRWKEALDFQPPSSGSGNYSGRYIRYGIREHAMGAIMNGISAFGANYKPYGGTFLNFVSYAAGAVRLSALSGHPVIWVATHDSIGVGEDGPTHQPIETLAHFRSLPNIQVWRPADGNEVSAAYKNSLESKHTPSIIALSRQNLPQLEGSSIESASKGGYVLQDVANPDIILVATGSEVSLSVEAAKTLAAKNIKARVVSLPDFFTFDKQPLEYRLSVLPDNVPIMSVEVLATTCWGKYAHQSFGIDRFGASGKAPEVFKFFGFTPEGVAERAQKTIAFYKGDKLISPLKKAF.

Substrate is bound at residue H30. Thiamine diphosphate contacts are provided by residues H69 and 116–118 (GPL). Residue D157 participates in Mg(2+) binding. Thiamine diphosphate-binding residues include G158 and N187. 2 residues coordinate Mg(2+): N187 and I189. H263 lines the substrate pocket. H263 serves as a coordination point for thiamine diphosphate. A phosphoserine mark is found at S286 and S335. Residues R359 and S386 each coordinate substrate. S402 carries the post-translational modification Phosphoserine. Thiamine diphosphate contacts are provided by E418 and F445. Residue E418 is the Proton donor of the active site. Substrate contacts are provided by H469 and D477. S492 is modified (phosphoserine). Residue R528 coordinates substrate. Residue K647 forms a Glycyl lysine isopeptide (Lys-Gly) (interchain with G-Cter in ubiquitin) linkage.

It belongs to the transketolase family. In terms of assembly, homodimer. The cofactor is Mg(2+). It depends on Ca(2+) as a cofactor. Requires Mn(2+) as cofactor. Co(2+) serves as cofactor. Thiamine diphosphate is required as a cofactor.

The catalysed reaction is D-sedoheptulose 7-phosphate + D-glyceraldehyde 3-phosphate = aldehydo-D-ribose 5-phosphate + D-xylulose 5-phosphate. In terms of biological role, catalyzes the transfer of a two-carbon ketol group from a ketose donor to an aldose acceptor, via a covalent intermediate with the cofactor thiamine pyrophosphate. The chain is Transketolase 1 (TKL1) from Saccharomyces cerevisiae (strain ATCC 204508 / S288c) (Baker's yeast).